The chain runs to 584 residues: Aspartate--tRNA(Asp/Asn) ligase (584 aa).

Glu-173 is an L-aspartate binding site. The tract at residues 197–200 (QLFK) is aspartate. L-aspartate is bound at residue Arg-219. ATP contacts are provided by residues 219-221 (RDE) and Gln-228. His-447 contacts L-aspartate. Glu-477 contacts ATP. Position 484 (Arg-484) interacts with L-aspartate. 529–532 (GFDR) contacts ATP.

This sequence belongs to the class-II aminoacyl-tRNA synthetase family. Type 1 subfamily. In terms of assembly, homodimer.

It is found in the cytoplasm. It catalyses the reaction tRNA(Asx) + L-aspartate + ATP = L-aspartyl-tRNA(Asx) + AMP + diphosphate. Aspartyl-tRNA synthetase with relaxed tRNA specificity since it is able to aspartylate not only its cognate tRNA(Asp) but also tRNA(Asn). Reaction proceeds in two steps: L-aspartate is first activated by ATP to form Asp-AMP and then transferred to the acceptor end of tRNA(Asp/Asn). The protein is Aspartate--tRNA(Asp/Asn) ligase of Campylobacter hominis (strain ATCC BAA-381 / DSM 21671 / CCUG 45161 / LMG 19568 / NCTC 13146 / CH001A).